The chain runs to 514 residues: Bifunctional purine biosynthesis protein PurH (514 aa).

One can recognise an MGS-like domain in the interval Met-1–Val-143.

The protein belongs to the PurH family.

The catalysed reaction is (6R)-10-formyltetrahydrofolate + 5-amino-1-(5-phospho-beta-D-ribosyl)imidazole-4-carboxamide = 5-formamido-1-(5-phospho-D-ribosyl)imidazole-4-carboxamide + (6S)-5,6,7,8-tetrahydrofolate. The enzyme catalyses IMP + H2O = 5-formamido-1-(5-phospho-D-ribosyl)imidazole-4-carboxamide. It participates in purine metabolism; IMP biosynthesis via de novo pathway; 5-formamido-1-(5-phospho-D-ribosyl)imidazole-4-carboxamide from 5-amino-1-(5-phospho-D-ribosyl)imidazole-4-carboxamide (10-formyl THF route): step 1/1. The protein operates within purine metabolism; IMP biosynthesis via de novo pathway; IMP from 5-formamido-1-(5-phospho-D-ribosyl)imidazole-4-carboxamide: step 1/1. The polypeptide is Bifunctional purine biosynthesis protein PurH (Deinococcus geothermalis (strain DSM 11300 / CIP 105573 / AG-3a)).